A 264-amino-acid polypeptide reads, in one-letter code: Signal peptidase I (264 aa).

Over 1–18 (MNRDNTKTNKTVKQEFAS) the chain is Cytoplasmic. The helical transmembrane segment at 19–39 (FTFVICIALVIRILIMEPFTV) threads the bilayer. Residues 40-264 (PTGSMKATIL…IFKNLYNVDE (225 aa)) lie on the Periplasmic side of the membrane. Active-site residues include Ser-43 and Lys-106.

Belongs to the peptidase S26 family.

It localises to the cell inner membrane. It catalyses the reaction Cleavage of hydrophobic, N-terminal signal or leader sequences from secreted and periplasmic proteins.. Functionally, complements E.coli mutants temperature-sensitive for LepB function. The protein is Signal peptidase I (lepB) of Rickettsia typhi (strain ATCC VR-144 / Wilmington).